Consider the following 762-residue polypeptide: PHD finger protein 20-like protein 1 (762 aa).

2 Tudor domains span residues 11–71 and 85–141; these read ITFE…LERP and VDFK…EDAK. Disordered regions lie at residues 178 to 231, 289 to 359, 383 to 411, 536 to 559, and 613 to 651; these read AKNK…TSSD, AEKK…CIKP, SVINKTSPSQPLNSPRSYKHSQRRRRSQR, SLKLPKGSSKKKRSSTSVSSEGTE, and LSGKKKEKEKEKKEKKEKDHKSKQKKKKKKKKKSKQHDY. Residues 193–211 show a composition bias toward basic and acidic residues; sequence NKDKEERKWLKVPSKKEET. Composition is skewed to polar residues over residues 319–340 and 383–398; these read DISSSANIQKPALLSSTLSSGK and SVINKTSPSQPLNSPR. Residues 399–410 are compositionally biased toward basic residues; that stretch reads SYKHSQRRRRSQ. The segment covering 614-632 has biased composition (basic and acidic residues); that stretch reads SGKKKEKEKEKKEKKEKDH. A compositionally biased stretch (basic residues) spans 633 to 647; it reads KSKQKKKKKKKKKSK.

The protein localises to the nucleus. Is a negative regulator of proteasomal degradation of methylated proteins. Involved in the maintainance of pluripotency of embryonic stem cells. This is PHD finger protein 20-like protein 1 (PHF20L1) from Gallus gallus (Chicken).